The sequence spans 917 residues: Lipoxygenase 6, chloroplastic (917 aa).

The transit peptide at 1-40 (MFVASPVKTNFNGVSLVKSPAFSALSCRKQHRVPISRQVR) directs the protein to the chloroplast. The span at 46 to 57 (EEKAVDQEDGKK) shows a compositional bias: basic and acidic residues. A disordered region spans residues 46–66 (EEKAVDQEDGKKSTNKPLINS). The region spanning 98–216 (ERFEHQLELF…DNPQARIIFR (119 aa)) is the PLAT domain. The 699-residue stretch at 219–917 (PCLPSETPDG…GRGIPNSISI (699 aa)) folds into the Lipoxygenase domain. Fe cation is bound by residues H575, H580, H767, and N771. Residues 880 to 904 (KDKKLKNRTGAGMPPYELLLPTSPH) form a disordered region. Residue I917 participates in Fe cation binding.

The protein belongs to the lipoxygenase family. Fe cation is required as a cofactor.

The protein localises to the plastid. It is found in the chloroplast. The catalysed reaction is (9Z,12Z)-octadecadienoate + O2 = (13S)-hydroperoxy-(9Z,11E)-octadecadienoate. The enzyme catalyses (9Z,12Z,15Z)-octadecatrienoate + O2 = (13S)-hydroperoxy-(9Z,11E,15Z)-octadecatrienoate. Its pathway is lipid metabolism; oxylipin biosynthesis. In terms of biological role, plant lipoxygenases may be involved in a number of diverse aspects of plant physiology including growth and development, pest resistance, and senescence or responses to wounding. Catalyzes the hydroperoxidation of lipids containing a cis,cis-1,4-pentadiene structure. 13S-lipoxygenase that can use linolenic acid as substrates. The polypeptide is Lipoxygenase 6, chloroplastic (Arabidopsis thaliana (Mouse-ear cress)).